A 102-amino-acid chain; its full sequence is Protein S100-A11 (102 aa).

A Phosphoserine modification is found at S2. Phosphothreonine is present on T7. 2 EF-hand domains span residues E12 to F47 and K52 to A87. N6-acetyllysine is present on K24. 8 residues coordinate Ca(2+): S28, T30, E35, D65, N67, D69, Q71, and E76.

Belongs to the S-100 family. As to quaternary structure, homodimer; disulfide-linked. In terms of processing, phosphorylation at Thr-7 significantly suppresses homodimerization and promotes association with NCL/nucleolin which induces nuclear translocation. In terms of tissue distribution, smooth muscle and non-muscle tissues.

Its subcellular location is the cytoplasm. It localises to the nucleus. Functionally, facilitates the differentiation and the cornification of keratinocytes. This chain is Protein S100-A11 (S100A11), found in Oryctolagus cuniculus (Rabbit).